The sequence spans 105 residues: Large ribosomal subunit protein uL24 (105 aa).

Belongs to the universal ribosomal protein uL24 family. As to quaternary structure, part of the 50S ribosomal subunit.

One of two assembly initiator proteins, it binds directly to the 5'-end of the 23S rRNA, where it nucleates assembly of the 50S subunit. In terms of biological role, one of the proteins that surrounds the polypeptide exit tunnel on the outside of the subunit. This Dictyoglomus turgidum (strain DSM 6724 / Z-1310) protein is Large ribosomal subunit protein uL24.